The following is a 100-amino-acid chain: MHAIVVCGSKQYLVHENDTFFVEKLEAPVGKEIQLDKVLMLDEKIGAPYLEKARVVCVVEKHGLQRKVNVIKHISQKHHLKKYGHRQPYTKLKVVRFVHD.

It belongs to the bacterial ribosomal protein bL21 family. In terms of assembly, part of the 50S ribosomal subunit. Contacts protein L20.

Functionally, this protein binds to 23S rRNA in the presence of protein L20. The chain is Large ribosomal subunit protein bL21 from Mycoplasma pneumoniae (strain ATCC 29342 / M129 / Subtype 1) (Mycoplasmoides pneumoniae).